A 150-amino-acid polypeptide reads, in one-letter code: SsrA-binding protein (150 aa).

The protein belongs to the SmpB family.

It localises to the cytoplasm. Its function is as follows. Required for rescue of stalled ribosomes mediated by trans-translation. Binds to transfer-messenger RNA (tmRNA), required for stable association of tmRNA with ribosomes. tmRNA and SmpB together mimic tRNA shape, replacing the anticodon stem-loop with SmpB. tmRNA is encoded by the ssrA gene; the 2 termini fold to resemble tRNA(Ala) and it encodes a 'tag peptide', a short internal open reading frame. During trans-translation Ala-aminoacylated tmRNA acts like a tRNA, entering the A-site of stalled ribosomes, displacing the stalled mRNA. The ribosome then switches to translate the ORF on the tmRNA; the nascent peptide is terminated with the 'tag peptide' encoded by the tmRNA and targeted for degradation. The ribosome is freed to recommence translation, which seems to be the essential function of trans-translation. This Borrelia garinii subsp. bavariensis (strain ATCC BAA-2496 / DSM 23469 / PBi) (Borreliella bavariensis) protein is SsrA-binding protein.